A 225-amino-acid chain; its full sequence is tRNA (guanine-N(1)-)-methyltransferase (225 aa).

Residues Gly-110 and 130 to 135 contribute to the S-adenosyl-L-methionine site; that span reads VGDYVL.

It belongs to the RNA methyltransferase TrmD family. Homodimer.

The protein localises to the cytoplasm. It carries out the reaction guanosine(37) in tRNA + S-adenosyl-L-methionine = N(1)-methylguanosine(37) in tRNA + S-adenosyl-L-homocysteine + H(+). Functionally, specifically methylates guanosine-37 in various tRNAs. The polypeptide is tRNA (guanine-N(1)-)-methyltransferase (Neorickettsia sennetsu (strain ATCC VR-367 / Miyayama) (Ehrlichia sennetsu)).